Consider the following 377-residue polypeptide: UDP-N-acetylenolpyruvoylglucosamine reductase (377 aa).

Residues 48–215 form the FAD-binding PCMH-type domain; that stretch reads LGGTPMAAVR…LGITLQLHTD (168 aa). Arginine 193 is a catalytic residue. The Proton donor role is filled by serine 268. Residue glutamate 369 is part of the active site.

The protein belongs to the MurB family. It depends on FAD as a cofactor.

It is found in the cytoplasm. The catalysed reaction is UDP-N-acetyl-alpha-D-muramate + NADP(+) = UDP-N-acetyl-3-O-(1-carboxyvinyl)-alpha-D-glucosamine + NADPH + H(+). The protein operates within cell wall biogenesis; peptidoglycan biosynthesis. Its function is as follows. Cell wall formation. In Corynebacterium diphtheriae (strain ATCC 700971 / NCTC 13129 / Biotype gravis), this protein is UDP-N-acetylenolpyruvoylglucosamine reductase.